The primary structure comprises 451 residues: UDP-glycosyltransferase 76C4 (451 aa).

UDP-alpha-D-glucose is bound by residues S273, 332–334 (APQ), 349–357 (HNGWNSTVE), and 371–374 (RWDQ).

It belongs to the UDP-glycosyltransferase family.

The chain is UDP-glycosyltransferase 76C4 (UGT76C4) from Arabidopsis thaliana (Mouse-ear cress).